Reading from the N-terminus, the 344-residue chain is Holliday junction branch migration complex subunit RuvB (344 aa).

Residues Met1–Tyr182 form a large ATPase domain (RuvB-L) region. ATP-binding positions include Ile21, Arg22, Gly63, Lys66, Thr67, Thr68, Glu129–Phe131, Arg172, Tyr182, and Arg219. Thr67 provides a ligand contact to Mg(2+). The interval Ala183–Glu253 is small ATPAse domain (RuvB-S). Residues Glu256 to Ser344 form a head domain (RuvB-H) region. Residues Arg311 and Arg316 each coordinate DNA.

It belongs to the RuvB family. Homohexamer. Forms an RuvA(8)-RuvB(12)-Holliday junction (HJ) complex. HJ DNA is sandwiched between 2 RuvA tetramers; dsDNA enters through RuvA and exits via RuvB. An RuvB hexamer assembles on each DNA strand where it exits the tetramer. Each RuvB hexamer is contacted by two RuvA subunits (via domain III) on 2 adjacent RuvB subunits; this complex drives branch migration. In the full resolvosome a probable DNA-RuvA(4)-RuvB(12)-RuvC(2) complex forms which resolves the HJ.

It is found in the cytoplasm. It catalyses the reaction ATP + H2O = ADP + phosphate + H(+). Its function is as follows. The RuvA-RuvB-RuvC complex processes Holliday junction (HJ) DNA during genetic recombination and DNA repair, while the RuvA-RuvB complex plays an important role in the rescue of blocked DNA replication forks via replication fork reversal (RFR). RuvA specifically binds to HJ cruciform DNA, conferring on it an open structure. The RuvB hexamer acts as an ATP-dependent pump, pulling dsDNA into and through the RuvAB complex. RuvB forms 2 homohexamers on either side of HJ DNA bound by 1 or 2 RuvA tetramers; 4 subunits per hexamer contact DNA at a time. Coordinated motions by a converter formed by DNA-disengaged RuvB subunits stimulates ATP hydrolysis and nucleotide exchange. Immobilization of the converter enables RuvB to convert the ATP-contained energy into a lever motion, pulling 2 nucleotides of DNA out of the RuvA tetramer per ATP hydrolyzed, thus driving DNA branch migration. The RuvB motors rotate together with the DNA substrate, which together with the progressing nucleotide cycle form the mechanistic basis for DNA recombination by continuous HJ branch migration. Branch migration allows RuvC to scan DNA until it finds its consensus sequence, where it cleaves and resolves cruciform DNA. The sequence is that of Holliday junction branch migration complex subunit RuvB from Pelodictyon phaeoclathratiforme (strain DSM 5477 / BU-1).